We begin with the raw amino-acid sequence, 196 residues long: ATP-dependent Clp protease proteolytic subunit (196 aa).

Residue Ser96 is the Nucleophile of the active site. His121 is a catalytic residue.

Belongs to the peptidase S14 family. As to quaternary structure, fourteen ClpP subunits assemble into 2 heptameric rings which stack back to back to give a disk-like structure with a central cavity, resembling the structure of eukaryotic proteasomes.

It is found in the cytoplasm. The enzyme catalyses Hydrolysis of proteins to small peptides in the presence of ATP and magnesium. alpha-casein is the usual test substrate. In the absence of ATP, only oligopeptides shorter than five residues are hydrolyzed (such as succinyl-Leu-Tyr-|-NHMec, and Leu-Tyr-Leu-|-Tyr-Trp, in which cleavage of the -Tyr-|-Leu- and -Tyr-|-Trp bonds also occurs).. In terms of biological role, cleaves peptides in various proteins in a process that requires ATP hydrolysis. Has a chymotrypsin-like activity. Plays a major role in the degradation of misfolded proteins. This is ATP-dependent Clp protease proteolytic subunit from Streptococcus pneumoniae (strain P1031).